Consider the following 507-residue polypeptide: ATP synthase subunit alpha, chloroplastic (507 aa).

170–177 (GDRQTGKT) is an ATP binding site.

It belongs to the ATPase alpha/beta chains family. As to quaternary structure, F-type ATPases have 2 components, CF(1) - the catalytic core - and CF(0) - the membrane proton channel. CF(1) has five subunits: alpha(3), beta(3), gamma(1), delta(1), epsilon(1). CF(0) has four main subunits: a, b, b' and c.

It is found in the plastid. The protein localises to the chloroplast thylakoid membrane. It catalyses the reaction ATP + H2O + 4 H(+)(in) = ADP + phosphate + 5 H(+)(out). Produces ATP from ADP in the presence of a proton gradient across the membrane. The alpha chain is a regulatory subunit. This Panax ginseng (Korean ginseng) protein is ATP synthase subunit alpha, chloroplastic.